A 336-amino-acid chain; its full sequence is Deoxyhypusine hydroxylase (336 aa).

HEAT-like PBS-type repeat units follow at residues 68–94 (LKHE…VVQD) and 101–127 (CRHE…LRDN). His-70, Glu-71, His-103, and Glu-104 together coordinate Fe cation. Residues 158–179 (LKPSDFTSIDPAPPMPLTAKEP) are disordered. 2 HEAT-like PBS-type repeats span residues 235–261 (FRHE…TLSD) and 268–295 (VRHE…FLND). Residues His-237, Glu-238, His-270, and Glu-271 each contribute to the Fe cation site.

Belongs to the deoxyhypusine hydroxylase family. It depends on Fe(2+) as a cofactor.

Its subcellular location is the cytoplasm. It is found in the nucleus. The enzyme catalyses [eIF5A protein]-deoxyhypusine + AH2 + O2 = [eIF5A protein]-hypusine + A + H2O. It participates in protein modification; eIF5A hypusination. Its function is as follows. Catalyzes the hydroxylation of the N(6)-(4-aminobutyl)-L-lysine intermediate to form hypusine, an essential post-translational modification only found in mature eIF-5A factor. This chain is Deoxyhypusine hydroxylase (lia1), found in Emericella nidulans (strain FGSC A4 / ATCC 38163 / CBS 112.46 / NRRL 194 / M139) (Aspergillus nidulans).